Here is a 118-residue protein sequence, read N- to C-terminus: Large ribosomal subunit protein bL20 (118 aa).

Belongs to the bacterial ribosomal protein bL20 family.

Its function is as follows. Binds directly to 23S ribosomal RNA and is necessary for the in vitro assembly process of the 50S ribosomal subunit. It is not involved in the protein synthesizing functions of that subunit. The protein is Large ribosomal subunit protein bL20 of Bacillus mycoides (strain KBAB4) (Bacillus weihenstephanensis).